Reading from the N-terminus, the 263-residue chain is Putative S-adenosyl-L-methionine-dependent methyltransferase Mjls_0079 (263 aa).

S-adenosyl-L-methionine-binding positions include aspartate 121 and 150 to 151 (ES).

Belongs to the UPF0677 family.

Exhibits S-adenosyl-L-methionine-dependent methyltransferase activity. The protein is Putative S-adenosyl-L-methionine-dependent methyltransferase Mjls_0079 of Mycobacterium sp. (strain JLS).